We begin with the raw amino-acid sequence, 85 residues long: Glutaredoxin (85 aa).

The 85-residue stretch at 1–85 (MQTVTMYTGP…EGGLDGLLNP (85 aa)) folds into the Glutaredoxin domain. A disulfide bond links C12 and C15.

Belongs to the glutaredoxin family. Monomer.

Its subcellular location is the cytoplasm. Functionally, has a glutathione-disulfide oxidoreductase activity in the presence of NADPH and glutathione reductase. Reduces low molecular weight disulfides and proteins. This is Glutaredoxin (grx) from Neisseria meningitidis serogroup A / serotype 4A (strain DSM 15465 / Z2491).